Here is a 396-residue protein sequence, read N- to C-terminus: Elongation factor Tu (396 aa).

A tr-type G domain is found at 10 to 206 (KPHVNVGTIG…ALDSYIPTPK (197 aa)). A G1 region spans residues 19 to 26 (GHVDHGKT). 19–26 (GHVDHGKT) contributes to the GTP binding site. T26 lines the Mg(2+) pocket. A G2 region spans residues 60 to 64 (GITIS). Residues 81-84 (DCPG) are G3. GTP is bound by residues 81–85 (DCPGH) and 136–139 (NKAD). The G4 stretch occupies residues 136–139 (NKAD). The interval 174–176 (SAL) is G5.

This sequence belongs to the TRAFAC class translation factor GTPase superfamily. Classic translation factor GTPase family. EF-Tu/EF-1A subfamily. As to quaternary structure, monomer.

Its subcellular location is the cytoplasm. The enzyme catalyses GTP + H2O = GDP + phosphate + H(+). In terms of biological role, GTP hydrolase that promotes the GTP-dependent binding of aminoacyl-tRNA to the A-site of ribosomes during protein biosynthesis. The polypeptide is Elongation factor Tu (Vesicomyosocius okutanii subsp. Calyptogena okutanii (strain HA)).